A 666-amino-acid polypeptide reads, in one-letter code: DNA ligase (666 aa).

NAD(+)-binding positions include 34–38 (DEEYD), 83–84 (SL), and Glu114. Lys116 serves as the catalytic N6-AMP-lysine intermediate. Positions 137, 174, 290, and 314 each coordinate NAD(+). 4 residues coordinate Zn(2+): Cys408, Cys411, Cys424, and Cys429. The BRCT domain maps to 584–666 (SIEGPLKGLT…LKMVKREHNG (83 aa)).

This sequence belongs to the NAD-dependent DNA ligase family. LigA subfamily. Mg(2+) is required as a cofactor. The cofactor is Mn(2+).

The enzyme catalyses NAD(+) + (deoxyribonucleotide)n-3'-hydroxyl + 5'-phospho-(deoxyribonucleotide)m = (deoxyribonucleotide)n+m + AMP + beta-nicotinamide D-nucleotide.. Functionally, DNA ligase that catalyzes the formation of phosphodiester linkages between 5'-phosphoryl and 3'-hydroxyl groups in double-stranded DNA using NAD as a coenzyme and as the energy source for the reaction. It is essential for DNA replication and repair of damaged DNA. In Coprothermobacter proteolyticus (strain ATCC 35245 / DSM 5265 / OCM 4 / BT), this protein is DNA ligase.